The chain runs to 356 residues: UDP-N-acetylenolpyruvoylglucosamine reductase (356 aa).

One can recognise an FAD-binding PCMH-type domain in the interval 19-227; the sequence is LGGPAARFCS…RDAVLSLRRS (209 aa). The active site involves arginine 167. Serine 244 serves as the catalytic Proton donor. Residue glutamate 348 is part of the active site.

Belongs to the MurB family. The cofactor is FAD.

The protein resides in the cytoplasm. It catalyses the reaction UDP-N-acetyl-alpha-D-muramate + NADP(+) = UDP-N-acetyl-3-O-(1-carboxyvinyl)-alpha-D-glucosamine + NADPH + H(+). It participates in cell wall biogenesis; peptidoglycan biosynthesis. Functionally, cell wall formation. The sequence is that of UDP-N-acetylenolpyruvoylglucosamine reductase from Thermobifida fusca (strain YX).